A 146-amino-acid polypeptide reads, in one-letter code: Anti-sigma F factor (146 aa).

The protein belongs to the anti-sigma-factor family.

The enzyme catalyses L-seryl-[protein] + ATP = O-phospho-L-seryl-[protein] + ADP + H(+). It catalyses the reaction L-threonyl-[protein] + ATP = O-phospho-L-threonyl-[protein] + ADP + H(+). Its function is as follows. Binds to sigma F and blocks its ability to form an RNA polymerase holoenzyme (E-sigma F). Phosphorylates SpoIIAA on a serine residue. This phosphorylation may enable SpoIIAA to act as an anti-anti-sigma factor that counteracts SpoIIAB and thus releases sigma F from inhibition. In Halalkalibacterium halodurans (strain ATCC BAA-125 / DSM 18197 / FERM 7344 / JCM 9153 / C-125) (Bacillus halodurans), this protein is Anti-sigma F factor.